We begin with the raw amino-acid sequence, 149 residues long: Large ribosomal subunit protein uL15 (149 aa).

Basic residues-rich tracts occupy residues 1 to 13 (MPTR…KHRG) and 21 to 42 (RIGK…HHHR). The interval 1–44 (MPTRLTKTRKHRGNVSAGKGRIGKHRKHPGGRGKAGGQHHHRTN) is disordered.

It belongs to the universal ribosomal protein uL15 family. Component of the large ribosomal subunit. Mature ribosomes consist of a small (40S) and a large (60S) subunit. The 40S subunit contains about 32 different proteins and 1 molecule of RNA (18S). The 60S subunit contains 45 different proteins and 3 molecules of RNA (25S, 5.8S and 5S).

The protein localises to the cytoplasm. In terms of biological role, component of the ribosome, a large ribonucleoprotein complex responsible for the synthesis of proteins in the cell. The small ribosomal subunit (SSU) binds messenger RNAs (mRNAs) and translates the encoded message by selecting cognate aminoacyl-transfer RNA (tRNA) molecules. The large subunit (LSU) contains the ribosomal catalytic site termed the peptidyl transferase center (PTC), which catalyzes the formation of peptide bonds, thereby polymerizing the amino acids delivered by tRNAs into a polypeptide chain. The nascent polypeptides leave the ribosome through a tunnel in the LSU and interact with protein factors that function in enzymatic processing, targeting, and the membrane insertion of nascent chains at the exit of the ribosomal tunnel. This chain is Large ribosomal subunit protein uL15, found in Candida albicans (strain SC5314 / ATCC MYA-2876) (Yeast).